The primary structure comprises 11197 residues: Nonribosomal peptide synthetase 5 (11197 aa).

An adenylation (A) domain 1 region spans residues 19-413; it reads AQRARKQPDA…DGTLQVVGHK (395 aa). The disordered stretch occupies residues 426-452; sequence HASSSASSVGETPGVTGPISTPMGDSV. A condensation (C) domain 1 region spans residues 690-897; that stretch reads KQLRQFCQEQ…LMDESMKQQI (208 aa). Residues 918 to 1310 are adenylation (A) domain 2; it reads DAAQDYPDAP…GRHDGQLKVR (393 aa). In terms of domain architecture, Carrier 1 spans 1446-1522; that stretch reads ADRSPVHMML…DMANNIAISE (77 aa). At S1483 the chain carries O-(pantetheine 4'-phosphoryl)serine. Residues 1952 to 2380 are condensation (C) domain 2; sequence VEDVYPCSPV…SDISLMDPLS (429 aa). The segment at 2406–2805 is adenylation (A) domain 3; the sequence is VARIEPDKMA…QRKDTQIKIR (400 aa). The 77-residue stretch at 2945 to 3021 folds into the Carrier 2 domain; it reads DSLTSTEVTI…SLAAFVDYDS (77 aa). O-(pantetheine 4'-phosphoryl)serine is present on S2982. The tract at residues 3041-3481 is epimerase (E) domain 1; it reads EESFALSPIQ…TSTMKSEFTL (441 aa). The interval 3515–3957 is condensation (C) domain 3; it reads EEIFPCSPMQ…VSPETRCELD (443 aa). Residues 3976-4371 form an adenylation (A) domain 4 region; that stretch reads FEQQVEKIPD…RRRDNQVKVR (396 aa). In terms of domain architecture, Carrier 3 spans 4508-4584; that stretch reads RKLTPMEQQL…ELANHARFKA (77 aa). The residue at position 4545 (S4545) is an O-(pantetheine 4'-phosphoryl)serine. The epimerase (E) domain 2 stretch occupies residues 4603–5022; the sequence is FPLLPIQRMF…LNEYTAALRS (420 aa). The interval 5069-5501 is condensation (C) domain 4; that stretch reads ESIYPCSPLQ…LVGDSERQGL (433 aa). Residues 5521–5918 are adenylation (A) domain 5; it reads EAQVKAIPDN…RRKDTQVKVR (398 aa). Residues 6068–6141 enclose the Carrier 4 domain; it reads SEAEDIIRAV…ALAQFVSQST (74 aa). Residue S6102 is modified to O-(pantetheine 4'-phosphoryl)serine. The segment at 6162–6512 is epimerase (E) domain 3; the sequence is FSLSPIQQMF…MEILFNYFGQ (351 aa). Positions 6636–7076 are condensation (C) domain 5; it reads EEIFPCSPIQ…LVGAETRREM (441 aa). Positions 7097 to 7491 are adenylation (A) domain 6; the sequence is ERNSQAMPDR…RRRDNQVKVR (395 aa). In terms of domain architecture, Carrier 5 spans 7636–7712; sequence KPKTKMEEHF…DLAGRSRFKN (77 aa). An O-(pantetheine 4'-phosphoryl)serine modification is found at S7673. Residues 7733–8162 form an epimerase (E) domain 4 region; that stretch reads ALLPIQRLFF…KYMLETLASQ (430 aa). The tract at residues 8205 to 8638 is condensation (C) domain 6; it reads EASYPCSPLQ…MLGDSGRKRI (434 aa). The tract at residues 8660–8832 is adenylation (A) domain 7; the sequence is EAHVKESPNR…DHRATATEIV (173 aa). The region spanning 9173–9248 is the Carrier 6 domain; it reads SAQTAVVQII…AMAAKAQQIG (76 aa). S9209 is subject to O-(pantetheine 4'-phosphoryl)serine. An epimerase (E) domain 5 region spans residues 9565–9683; it reads RVKDMRRAIP…LHEVVSALQK (119 aa). The segment at 9721–10116 is condensation (C) domain 7; that stretch reads VEDVYPTSPM…LVPAKHMEQL (396 aa). The adenylation (A) domain 8 stretch occupies residues 10136 to 10529; it reads DDMVRSTPTA…VGRKDTQIKI (394 aa). Residues 10663–10749 enclose the Carrier 7 domain; sequence LDSSDYVAMQ…TLAVTIKADM (87 aa). An O-(pantetheine 4'-phosphoryl)serine modification is found at S10708. Residues 10806 to 11104 are thioesterase (TE) domain; sequence NFLVTGSTGF…SLRPMSGPEW (299 aa).

The protein belongs to the NRP synthetase family.

It participates in secondary metabolite biosynthesis. Functionally, nonribosomal peptide synthetase; part of the Fg3_54/C64 gene cluster that mediates the biosynthesis of the octapeptide fusaoctaxin A, a virulence factor that is required for cell-to-cell invasiveness of plant host. The 2 nonribosomal peptide synthetases NRPS9 and NRPS5 form an assembly line which likely utilizes GABA as a starter unit (loaded on the unique module M1 of NRPS9) and sequentially incorporates seven extender units composed of the residues L-Ala, L-allo-Ile, L-Ser, L-Val, L-Ser, L-Leu and L-Leu, respectively. During the process, each of the residues that are tethered on modules M3-M7 of NRPS5 containing an E domain can undergo an epimerization reaction to produce a D-configuration before the transpeptidation reaction occurs. The elongation of the peptidyl chain might be terminated by module M8-mediated L-Leu incorporation, followed by R domain-catalyzed 4 electron reduction to release the resulting octapeptide from the assembly line as an alcohol. Fusaoctaxin A is cleaved by the cluster specific ABC transporter FGM5 to the pentapeptide fusapentaxin A and the tripeptide fusatrixin A. The other enzymes from the cluster, FGM1, FGM2, FGM3 and FGM9 seem not to be involved in the biosynthesis of fusaoctaxin A and their functions have still to be determined. This is Nonribosomal peptide synthetase 5 from Gibberella zeae (strain ATCC MYA-4620 / CBS 123657 / FGSC 9075 / NRRL 31084 / PH-1) (Wheat head blight fungus).